The following is a 216-amino-acid chain: Pyrophosphatase PpaX (216 aa).

D9 acts as the Nucleophile in catalysis.

It belongs to the HAD-like hydrolase superfamily. PpaX family. The cofactor is Mg(2+).

It carries out the reaction diphosphate + H2O = 2 phosphate + H(+). Functionally, hydrolyzes pyrophosphate formed during P-Ser-HPr dephosphorylation by HPrK/P. Might play a role in controlling the intracellular pyrophosphate pool. This chain is Pyrophosphatase PpaX, found in Bacillus anthracis (strain A0248).